A 270-amino-acid polypeptide reads, in one-letter code: MADRINESHQRFLQALMSHGIMEGSAVRALHRHCCELHKVHYMHDKLDDFVGVLNRHLQPLFMTIEKGVGEEDGLTYYALVNRVENDITKMASDYAENELELFRKTMELIILSDNGFATSISILNLADELQSKKMKKKEVEQLLQSFVQEKWLIGRNGEYTLHTRCIMELEHYIRNTYQDVAKICNVCRKVAIQSQLCENCGIPLHLQCAGKYFHGKANPTCPNCNESWPHEIPDLNQVSSQGPSHSQTETVRGRNQRSKNTSTASRTSR.

Residues 185–226 (CNVCRKVAIQSQLCENCGIPLHLQCAGKYFHGKANPTCPNCN) form an RING-type; atypical zinc finger. The disordered stretch occupies residues 236–270 (LNQVSSQGPSHSQTETVRGRNQRSKNTSTASRTSR). Composition is skewed to polar residues over residues 237 to 251 (NQVS…QTET) and 259 to 270 (SKNTSTASRTSR).

This sequence belongs to the NSE1 family. In terms of assembly, component of the SMC5-SMC6 complex.

The protein resides in the nucleus. It localises to the chromosome. Its subcellular location is the telomere. It carries out the reaction S-ubiquitinyl-[E2 ubiquitin-conjugating enzyme]-L-cysteine + [acceptor protein]-L-lysine = [E2 ubiquitin-conjugating enzyme]-L-cysteine + N(6)-ubiquitinyl-[acceptor protein]-L-lysine.. In terms of biological role, RING-type zinc finger-containing E3 ubiquitin ligase that assembles with melanoma antigen protein (MAGE) to catalyze the direct transfer of ubiquitin from E2 ubiquitin-conjugating enzyme to a specific substrate. Within MAGE-RING ubiquitin ligase complex, MAGE stimulates and specifies ubiquitin ligase activity likely through recruitment and/or stabilization of the E2 ubiquitin-conjugating enzyme at the E3:substrate complex. Involved in maintenance of genome integrity, DNA damage response and DNA repair. The protein is Non-structural maintenance of chromosomes element 1 homolog (nsmce1) of Xenopus laevis (African clawed frog).